A 182-amino-acid polypeptide reads, in one-letter code: Gamma-crystallin N (182 aa).

Beta/gamma crystallin 'Greek key' domains are found at residues 6-46, 47-89, and 95-136; these read GKIT…HVES, GAWV…RPVG, and FRLE…KVYG. The segment at 153-182 is disordered; sequence LSSSLQSDQGPEEATTKPATTQPPFLTANL. Residues 169 to 182 are compositionally biased toward polar residues; it reads KPATTQPPFLTANL.

Belongs to the beta/gamma-crystallin family. As to quaternary structure, monomer. Not specifically expressed in eye.

In Homo sapiens (Human), this protein is Gamma-crystallin N.